The primary structure comprises 345 residues: Fe-S cluster assembly protein DRE2 (345 aa).

Residues 11–166 (FSHSSNGVVL…SIGSSSGSSS (156 aa)) form an N-terminal SAM-like domain region. The tract at residues 147–166 (SKPATASSSFSIGSSSGSSS) is disordered. Residues 153–166 (SSSFSIGSSSGSSS) show a composition bias toward low complexity. Positions 167-210 (ALPLRRKLGSGASANAKKSLWATQPASANDLIDEASLLRDADFV) are linker. C220, C233, C236, and C238 together coordinate [2Fe-2S] cluster. The segment at 220 to 238 (CDVGAGQGKKKKACKGCTC) is fe-S binding site A. Positions 307, 310, 318, and 321 each coordinate [4Fe-4S] cluster. Short sequence motifs (cx2C motif) lie at residues 307 to 310 (CGSC) and 318 to 321 (CSSC). Positions 307–321 (CGSCFLGDAFRCSSC) are fe-S binding site B.

It belongs to the anamorsin family. Monomer. Interacts with TAH18. Interacts with MIA40. It depends on [2Fe-2S] cluster as a cofactor. [4Fe-4S] cluster is required as a cofactor.

The protein resides in the cytoplasm. Its subcellular location is the mitochondrion intermembrane space. Its function is as follows. Component of the cytosolic iron-sulfur (Fe-S) protein assembly (CIA) machinery required for the maturation of extramitochondrial Fe-S proteins. Part of an electron transfer chain functioning in an early step of cytosolic Fe-S biogenesis, facilitating the de novo assembly of a [4Fe-4S] cluster on the scaffold complex CFD1-NBP35. Electrons are transferred to DRE2 from NADPH via the FAD- and FMN-containing protein TAH18. TAH18-DRE2 are also required for the assembly of the diferric tyrosyl radical cofactor of ribonucleotide reductase (RNR), probably by providing electrons for reduction during radical cofactor maturation in the catalytic small subunit RNR2. This Mycosarcoma maydis (Corn smut fungus) protein is Fe-S cluster assembly protein DRE2.